Reading from the N-terminus, the 327-residue chain is Annexin A8 (327 aa).

Annexin repeat units follow at residues 21-92 (FNPD…ALMY), 93-164 (PPYR…CLLQ), 177-249 (GLAL…TVVK), and 253-324 (NVHS…NLVG). Residues methionine 266, glycine 268, glycine 270, and aspartate 310 each coordinate Ca(2+).

This sequence belongs to the annexin family.

In terms of biological role, this protein is an anticoagulant protein that acts as an indirect inhibitor of the thromboplastin-specific complex, which is involved in the blood coagulation cascade. This chain is Annexin A8 (Anxa8), found in Rattus norvegicus (Rat).